We begin with the raw amino-acid sequence, 615 residues long: Dehydrogenase str4 (615 aa).

FAD-binding positions include 45–46 (TA), 66–67 (EA), and 123–126 (NGSM). His-552 acts as the Proton acceptor in catalysis. Residues Ala-585 and 596–597 (PA) each bind FAD.

It belongs to the GMC oxidoreductase family. As to quaternary structure, homodimer. It depends on FAD as a cofactor.

It functions in the pathway mycotoxin biosynthesis. Its function is as follows. Dehydrogenase; part of the gene cluster that mediates the biosynthesis of strobilurin A, an antifungal polyketide that contains a key beta-methoxyacrylate toxophore that targets the complex III of the mitochondrial electron transport chain. Strobilurin biosynthesis begins with construction of benzoyl CoA by step-wise elimination of ammonia from phenylalanine by the phenylalanine ammonia-lyase str11, oxygenation by str8 and retro-Claisen reaction to form benzoic acid, which is activated to its CoA thiolester benzoyl CoA by the dedicated CoA ligase str10. Benzoyl CoA forms the starter unit for the highly reducing polyketide synthase stpks1 that produces the polyketide prestrobilutin A. The FAD-dependent oxygenase str9 then catalyzes the key oxidative rearrangement responsible for the creation of the beta-methoxyacrylate toxophore. Str9 performs epoxidation of the 2,3 olefin of prestrobilutin A, followed by Meinwald rearrangement to furnish the aldehyde intermediate. Rapid enolization of the aldehyde intermediate would give the beta-methoxyacrylate skeleton and methylations catalyzed by str2 and str3 complete the synthesis and lead to the production of strobilurin A. The short-chain dehydrogenase stl2 and the dehydrogenase str4 play a role in the shunt pathway leading to the production of bolineol. The cluster encodes no obvious halogenase gene that could be involved in production of strobilurin B, nor any obvious dimethylallyl-transferase that could be involved in the production of strobilurin G. It is possible that unknown proteins encoded in, or near, the cluster (such as str1 or stl1) may form new classes of halogenases or dimethylally-transferases, or that the responsible genes are located elsewhere on the genome. Similarly, proteins encoded by str5/str6 hydrolases appear to have no chemical role in the biosynthesis of strobilurin A. Finally, no obvious self-resistance gene is found within the cluster. The chain is Dehydrogenase str4 from Strobilurus tenacellus.